The following is a 79-amino-acid chain: D-alanyl carrier protein (79 aa).

The region spanning 1-77 (MDTKQAVLDI…KIIAKVESLR (77 aa)) is the Carrier domain. Residue Ser35 is modified to O-(pantetheine 4'-phosphoryl)serine.

The protein belongs to the DltC family. Post-translationally, 4'-phosphopantetheine is transferred from CoA to a specific serine of apo-DCP.

Its subcellular location is the cytoplasm. It functions in the pathway cell wall biogenesis; lipoteichoic acid biosynthesis. Functionally, carrier protein involved in the D-alanylation of lipoteichoic acid (LTA). The loading of thioester-linked D-alanine onto DltC is catalyzed by D-alanine--D-alanyl carrier protein ligase DltA. The DltC-carried D-alanyl group is further transferred to cell membrane phosphatidylglycerol (PG) by forming an ester bond, probably catalyzed by DltD. D-alanylation of LTA plays an important role in modulating the properties of the cell wall in Gram-positive bacteria, influencing the net charge of the cell wall. The sequence is that of D-alanyl carrier protein from Lactobacillus gasseri (strain ATCC 33323 / DSM 20243 / BCRC 14619 / CIP 102991 / JCM 1131 / KCTC 3163 / NCIMB 11718 / NCTC 13722 / AM63).